The sequence spans 431 residues: Ornithine decarboxylase (431 aa).

Position 94 is an N6-(pyridoxal phosphate)lysine (Lys94). Residues Ser226, Gly264, and 297–300 each bind pyridoxal 5'-phosphate; that span reads EPGR. Position 340 to 341 (340 to 341) interacts with substrate; that stretch reads YD. Cys376 functions as the Proton donor; shared with dimeric partner in the catalytic mechanism. Position 377 (Asp377) interacts with substrate. A pyridoxal 5'-phosphate-binding site is contributed by Tyr405.

Belongs to the Orn/Lys/Arg decarboxylase class-II family. As to quaternary structure, homodimer. Only the dimer is catalytically active, as the active sites are constructed of residues from both monomers. The cofactor is pyridoxal 5'-phosphate.

The catalysed reaction is L-ornithine + H(+) = putrescine + CO2. The protein operates within amine and polyamine biosynthesis; putrescine biosynthesis via L-ornithine pathway; putrescine from L-ornithine: step 1/1. Its activity is regulated as follows. Inhibited by antizyme (AZ) in response to polyamine levels. AZ inhibits the assembly of the functional homodimer by binding to ODC monomers and targeting them for ubiquitin-independent proteolytic destruction by the 26S proteasome. Its function is as follows. Catalyzes the first and rate-limiting step of polyamine biosynthesis that converts ornithine into putrescine, which is the precursor for the polyamines, spermidine and spermine. Polyamines are essential for cell proliferation and are implicated in cellular processes, ranging from DNA replication to apoptosis. The polypeptide is Ornithine decarboxylase (Datura stramonium (Jimsonweed)).